The chain runs to 277 residues: Type II restriction enzyme EcoRI (277 aa).

Catalysis depends on residues Asp-91, Glu-111, and Lys-113. The Mg(2+) site is built by Asp-91 and Glu-111.

Belongs to the EcoRI type II restriction endonuclease family. In terms of assembly, homodimer. The cofactor is Mg(2+).

It carries out the reaction Endonucleolytic cleavage of DNA to give specific double-stranded fragments with terminal 5'-phosphates.. Functionally, a P subtype restriction enzyme that recognizes the double-stranded sequence 5'-GAATTC-3' and cleaves after G-1. This is Type II restriction enzyme EcoRI (ecoRIR) from Escherichia coli.